The sequence spans 1378 residues: DNA-directed RNA polymerase subunit beta (1378 aa).

The protein belongs to the RNA polymerase beta chain family. The RNAP catalytic core consists of 2 alpha, 1 beta, 1 beta' and 1 omega subunit. When a sigma factor is associated with the core the holoenzyme is formed, which can initiate transcription.

The catalysed reaction is RNA(n) + a ribonucleoside 5'-triphosphate = RNA(n+1) + diphosphate. Its function is as follows. DNA-dependent RNA polymerase catalyzes the transcription of DNA into RNA using the four ribonucleoside triphosphates as substrates. The polypeptide is DNA-directed RNA polymerase subunit beta (Mesorhizobium japonicum (strain LMG 29417 / CECT 9101 / MAFF 303099) (Mesorhizobium loti (strain MAFF 303099))).